A 345-amino-acid chain; its full sequence is Ninja-family protein AFP1 (345 aa).

2 disordered regions span residues 114-185 and 201-256; these read TSLP…ATAN and QVSG…RRLS. Composition is skewed to basic and acidic residues over residues 123–132 and 222–232; these read EWRKRKEMQT and LETKASSDEAR. Positions 235-249 are enriched in low complexity; it reads PSTTQPQQETTTKPT.

This sequence belongs to the Ninja family. As to quaternary structure, forms a heterodimer with AFP2. Interacts with ABI5/DPBF1, DPBF2, AREB3/DPBF3, ABF1, ABF3/DPBF5 and ABF4/AREB2.

The protein localises to the nucleus. Functionally, acts as a negative regulator of abscisic acid (ABA) response during germination through the ubiquitin-mediated proteolysis of ABI5/DPBF1. In Arabidopsis thaliana (Mouse-ear cress), this protein is Ninja-family protein AFP1 (AFP1).